The primary structure comprises 677 residues: Methionine--tRNA ligase (677 aa).

The 'HIGH' region signature appears at 15-25 (PYANGSIHLGH). The Zn(2+) site is built by cysteine 146, cysteine 149, cysteine 159, and cysteine 162. Residues 333 to 337 (KMSKS) carry the 'KMSKS' region motif. Lysine 336 lines the ATP pocket. In terms of domain architecture, tRNA-binding spans 575-677 (DFAKIDLRVA…DGAKPGQQVK (103 aa)).

The protein belongs to the class-I aminoacyl-tRNA synthetase family. MetG type 1 subfamily. Homodimer. The cofactor is Zn(2+).

The protein resides in the cytoplasm. The enzyme catalyses tRNA(Met) + L-methionine + ATP = L-methionyl-tRNA(Met) + AMP + diphosphate. Functionally, is required not only for elongation of protein synthesis but also for the initiation of all mRNA translation through initiator tRNA(fMet) aminoacylation. The sequence is that of Methionine--tRNA ligase from Salmonella paratyphi A (strain AKU_12601).